A 356-amino-acid polypeptide reads, in one-letter code: Alanine racemase, catabolic (356 aa).

Lysine 35 (proton acceptor; specific for D-alanine) is an active-site residue. An N6-(pyridoxal phosphate)lysine modification is found at lysine 35. Arginine 130 is a substrate binding site. Tyrosine 253 acts as the Proton acceptor; specific for L-alanine in catalysis. Methionine 301 is a binding site for substrate.

It belongs to the alanine racemase family. Pyridoxal 5'-phosphate serves as cofactor.

The enzyme catalyses L-alanine = D-alanine. In terms of biological role, isomerizes L-alanine to D-alanine which is then oxidized to pyruvate by DadA. The sequence is that of Alanine racemase, catabolic (dadX) from Escherichia coli (strain K12).